Here is a 282-residue protein sequence, read N- to C-terminus: Phosphatidylserine decarboxylase proenzyme (282 aa).

Residues Asp-88, His-144, and Ser-247 each act as charge relay system; for autoendoproteolytic cleavage activity in the active site. Catalysis depends on Ser-247, which acts as the Schiff-base intermediate with substrate; via pyruvic acid; for decarboxylase activity. At Ser-247 the chain carries Pyruvic acid (Ser); by autocatalysis.

The protein belongs to the phosphatidylserine decarboxylase family. PSD-B subfamily. Prokaryotic type I sub-subfamily. Heterodimer of a large membrane-associated beta subunit and a small pyruvoyl-containing alpha subunit. Pyruvate serves as cofactor. In terms of processing, is synthesized initially as an inactive proenzyme. Formation of the active enzyme involves a self-maturation process in which the active site pyruvoyl group is generated from an internal serine residue via an autocatalytic post-translational modification. Two non-identical subunits are generated from the proenzyme in this reaction, and the pyruvate is formed at the N-terminus of the alpha chain, which is derived from the carboxyl end of the proenzyme. The autoendoproteolytic cleavage occurs by a canonical serine protease mechanism, in which the side chain hydroxyl group of the serine supplies its oxygen atom to form the C-terminus of the beta chain, while the remainder of the serine residue undergoes an oxidative deamination to produce ammonia and the pyruvoyl prosthetic group on the alpha chain. During this reaction, the Ser that is part of the protease active site of the proenzyme becomes the pyruvoyl prosthetic group, which constitutes an essential element of the active site of the mature decarboxylase.

It localises to the cell membrane. It catalyses the reaction a 1,2-diacyl-sn-glycero-3-phospho-L-serine + H(+) = a 1,2-diacyl-sn-glycero-3-phosphoethanolamine + CO2. Its pathway is phospholipid metabolism; phosphatidylethanolamine biosynthesis; phosphatidylethanolamine from CDP-diacylglycerol: step 2/2. In terms of biological role, catalyzes the formation of phosphatidylethanolamine (PtdEtn) from phosphatidylserine (PtdSer). This is Phosphatidylserine decarboxylase proenzyme from Xanthomonas campestris pv. campestris (strain B100).